Reading from the N-terminus, the 391-residue chain is Cilia- and flagella-associated protein 263 (391 aa).

A disordered region spans residues 1–21 (MTDDDSETSASETQAQEESDL). Coiled coils occupy residues 95-243 (LSVD…NQEL) and 294-369 (LRKE…LKGY).

This sequence belongs to the CFAP263 family. As to quaternary structure, forms a complex with CFAP184; the interaction is required for functional activity in cilia. Interacts with HAP1 and PCM1.

Its subcellular location is the cytoplasm. It is found in the cytoskeleton. It localises to the microtubule organizing center. The protein resides in the centrosome. The protein localises to the centriolar satellite. Its subcellular location is the cell projection. It is found in the cilium. Component of centriolar satellites contributing to primary cilium formation. In complex with CFAP263, acts as a regulator of ciliary beating that connects radial spoke 3 (RS3) to the inner dynein arm (IDA) and the nexin-dynein regulatory complex (N-DRC). The complex is positioned parallel to N-DRC and forms a connection between the arch at the base of RS3, the IDA tail and N-DRC. The protein is Cilia- and flagella-associated protein 263 (CFAP263) of Bos taurus (Bovine).